A 120-amino-acid chain; its full sequence is Large ribosomal subunit protein bL20 (120 aa).

Belongs to the bacterial ribosomal protein bL20 family.

Functionally, binds directly to 23S ribosomal RNA and is necessary for the in vitro assembly process of the 50S ribosomal subunit. It is not involved in the protein synthesizing functions of that subunit. The polypeptide is Large ribosomal subunit protein bL20 (Ureaplasma parvum serovar 3 (strain ATCC 27815 / 27 / NCTC 11736)).